We begin with the raw amino-acid sequence, 348 residues long: Protein RecA (348 aa).

65-72 (GPESSGKT) is a binding site for ATP.

Belongs to the RecA family.

It is found in the cytoplasm. Its function is as follows. Can catalyze the hydrolysis of ATP in the presence of single-stranded DNA, the ATP-dependent uptake of single-stranded DNA by duplex DNA, and the ATP-dependent hybridization of homologous single-stranded DNAs. It interacts with LexA causing its activation and leading to its autocatalytic cleavage. The protein is Protein RecA of Alteromonas mediterranea (strain DSM 17117 / CIP 110805 / LMG 28347 / Deep ecotype).